A 436-amino-acid chain; its full sequence is Serine--tRNA ligase (436 aa).

L-serine is bound at residue 241–243 (TSE). 272–274 (RAE) contacts ATP. An L-serine-binding site is contributed by Glu-295. 359-362 (EISS) provides a ligand contact to ATP. Ser-395 is an L-serine binding site.

This sequence belongs to the class-II aminoacyl-tRNA synthetase family. Type-1 seryl-tRNA synthetase subfamily. In terms of assembly, homodimer. The tRNA molecule binds across the dimer.

It localises to the cytoplasm. It carries out the reaction tRNA(Ser) + L-serine + ATP = L-seryl-tRNA(Ser) + AMP + diphosphate + H(+). The catalysed reaction is tRNA(Sec) + L-serine + ATP = L-seryl-tRNA(Sec) + AMP + diphosphate + H(+). Its pathway is aminoacyl-tRNA biosynthesis; selenocysteinyl-tRNA(Sec) biosynthesis; L-seryl-tRNA(Sec) from L-serine and tRNA(Sec): step 1/1. In terms of biological role, catalyzes the attachment of serine to tRNA(Ser). Is also able to aminoacylate tRNA(Sec) with serine, to form the misacylated tRNA L-seryl-tRNA(Sec), which will be further converted into selenocysteinyl-tRNA(Sec). The chain is Serine--tRNA ligase from Beijerinckia indica subsp. indica (strain ATCC 9039 / DSM 1715 / NCIMB 8712).